A 155-amino-acid chain; its full sequence is Molybdopterin synthase catalytic subunit 2 (155 aa).

Substrate-binding positions include 101–102 (HR), Lys117, and 124–126 (KKE).

The protein belongs to the MoaE family. MOCS2B subfamily. In terms of assembly, heterotetramer; composed of 2 small (MOCS2A) and 2 large (MOCS2B) subunits.

It is found in the cytoplasm. The catalysed reaction is 2 [molybdopterin-synthase sulfur-carrier protein]-C-terminal-Gly-aminoethanethioate + cyclic pyranopterin phosphate + H2O = molybdopterin + 2 [molybdopterin-synthase sulfur-carrier protein]-C-terminal Gly-Gly + 2 H(+). It functions in the pathway cofactor biosynthesis; molybdopterin biosynthesis. Functionally, catalytic subunit of the molybdopterin synthase complex, a complex that catalyzes the conversion of precursor Z into molybdopterin. Acts by mediating the incorporation of 2 sulfur atoms from thiocarboxylated MOCS2A into precursor Z to generate a dithiolene group. The chain is Molybdopterin synthase catalytic subunit 2 from Aedes aegypti (Yellowfever mosquito).